Reading from the N-terminus, the 643-residue chain is uncharacterized protein (643 aa).

Residues 9-29 (IVLALLLLLLPVVCGDVSVYK) traverse the membrane as a helical segment.

It localises to the membrane. This is an uncharacterized protein from Methanocaldococcus jannaschii (strain ATCC 43067 / DSM 2661 / JAL-1 / JCM 10045 / NBRC 100440) (Methanococcus jannaschii).